A 213-amino-acid polypeptide reads, in one-letter code: Cell division protein SepF 2 (213 aa).

Positions 16–89 are disordered; it reads EDDGYDGRGF…ASLAAESSRP (74 aa). The segment covering 27–39 has biased composition (acidic residues); it reads PDDDFEPELDPEP.

Belongs to the SepF family. Homodimer. Interacts with FtsZ.

It is found in the cytoplasm. Functionally, cell division protein that is part of the divisome complex and is recruited early to the Z-ring. Probably stimulates Z-ring formation, perhaps through the cross-linking of FtsZ protofilaments. Its function overlaps with FtsA. This is Cell division protein SepF 2 from Streptomyces coelicolor (strain ATCC BAA-471 / A3(2) / M145).